Reading from the N-terminus, the 96-residue chain is Glutamyl-tRNA(Gln) amidotransferase subunit C (96 aa).

It belongs to the GatC family. As to quaternary structure, heterotrimer of A, B and C subunits.

It catalyses the reaction L-glutamyl-tRNA(Gln) + L-glutamine + ATP + H2O = L-glutaminyl-tRNA(Gln) + L-glutamate + ADP + phosphate + H(+). It carries out the reaction L-aspartyl-tRNA(Asn) + L-glutamine + ATP + H2O = L-asparaginyl-tRNA(Asn) + L-glutamate + ADP + phosphate + 2 H(+). Functionally, allows the formation of correctly charged Asn-tRNA(Asn) or Gln-tRNA(Gln) through the transamidation of misacylated Asp-tRNA(Asn) or Glu-tRNA(Gln) in organisms which lack either or both of asparaginyl-tRNA or glutaminyl-tRNA synthetases. The reaction takes place in the presence of glutamine and ATP through an activated phospho-Asp-tRNA(Asn) or phospho-Glu-tRNA(Gln). The protein is Glutamyl-tRNA(Gln) amidotransferase subunit C of Deinococcus radiodurans (strain ATCC 13939 / DSM 20539 / JCM 16871 / CCUG 27074 / LMG 4051 / NBRC 15346 / NCIMB 9279 / VKM B-1422 / R1).